A 304-amino-acid polypeptide reads, in one-letter code: Nod factor export ATP-binding protein I (304 aa).

An ABC transporter domain is found at Ile6–Tyr236. Gly38–Thr45 contacts ATP.

It belongs to the ABC transporter superfamily. Lipooligosaccharide exporter (TC 3.A.1.102) family. The complex is composed of two ATP-binding proteins (NodI) and two transmembrane proteins (NodJ).

It is found in the cell inner membrane. Part of the ABC transporter complex NodIJ involved in the export of the nodulation factors (Nod factors), the bacterial signal molecules that induce symbiosis and subsequent nodulation induction. Nod factors are LCO (lipo-chitin oligosaccharide), a modified beta-1,4-linked N-acetylglucosamine oligosaccharide. This subunit is responsible for energy coupling to the transport system. This is Nod factor export ATP-binding protein I from Burkholderia pseudomallei (strain K96243).